A 66-amino-acid polypeptide reads, in one-letter code: Beta-toxin Chui4 (66 aa).

In terms of domain architecture, LCN-type CS-alpha/beta spans 1–66; the sequence is KEGYLVELGT…VWPLKNKTCK (66 aa). 4 disulfides stabilise this stretch: Cys-12-Cys-65, Cys-16-Cys-41, Cys-25-Cys-46, and Cys-29-Cys-48.

The protein belongs to the long (4 C-C) scorpion toxin superfamily. Sodium channel inhibitor family. Beta subfamily. In terms of tissue distribution, expressed by the venom gland.

It is found in the secreted. Its function is as follows. Beta toxins bind voltage-independently at site-4 of sodium channels (Nav) and shift the voltage of activation toward more negative potentials thereby affecting sodium channel activation and promoting spontaneous and repetitive firing. Acts on human sodium channel Nav1.6/SCN8A. Also able to weakly shift the activation curves of human Nav1.2/SCN2A and Nav1.4/SCN4A. The chain is Beta-toxin Chui4 from Centruroides huichol (Scorpion).